A 191-amino-acid chain; its full sequence is UPF0301 protein Bphy_2327 (191 aa).

This sequence belongs to the UPF0301 (AlgH) family.

This is UPF0301 protein Bphy_2327 from Paraburkholderia phymatum (strain DSM 17167 / CIP 108236 / LMG 21445 / STM815) (Burkholderia phymatum).